A 375-amino-acid polypeptide reads, in one-letter code: Mitogen-activated protein kinase 1 (375 aa).

One can recognise a Protein kinase domain in the interval 43 to 329 (RPPIMPIGRG…VEEALAHPYL (287 aa)). ATP contacts are provided by residues 49 to 57 (IGRGAYGIV) and lysine 72. The active-site Proton acceptor is aspartate 169. A Phosphothreonine modification is found at threonine 201. Positions 201–203 (TEY) match the TXY motif. Residue tyrosine 203 is modified to Phosphotyrosine. Threonine 206 carries the post-translational modification Phosphothreonine.

The protein belongs to the protein kinase superfamily. CMGC Ser/Thr protein kinase family. MAP kinase subfamily. The cofactor is Mg(2+). In terms of processing, activated by wounding and UV-C in a cultivar-dependent manner; phosphorylated in cv. Pungchon but not in cv. Subicho.

It carries out the reaction L-seryl-[protein] + ATP = O-phospho-L-seryl-[protein] + ADP + H(+). It catalyses the reaction L-threonyl-[protein] + ATP = O-phospho-L-threonyl-[protein] + ADP + H(+). With respect to regulation, activated by threonine and tyrosine phosphorylation. Functionally, stress-inducible protein kinase involved in oxidative stress-mediated and innate immune MAP kinase signaling cascades. The polypeptide is Mitogen-activated protein kinase 1 (Capsicum annuum (Capsicum pepper)).